The sequence spans 294 residues: tRNA dimethylallyltransferase (294 aa).

Gly-10–Thr-17 provides a ligand contact to ATP. Thr-12–Thr-17 serves as a coordination point for substrate. Residues Asp-35–Gln-38 form an interaction with substrate tRNA region.

It belongs to the IPP transferase family. In terms of assembly, monomer. The cofactor is Mg(2+).

The enzyme catalyses adenosine(37) in tRNA + dimethylallyl diphosphate = N(6)-dimethylallyladenosine(37) in tRNA + diphosphate. Catalyzes the transfer of a dimethylallyl group onto the adenine at position 37 in tRNAs that read codons beginning with uridine, leading to the formation of N6-(dimethylallyl)adenosine (i(6)A). The polypeptide is tRNA dimethylallyltransferase (Streptococcus mutans serotype c (strain ATCC 700610 / UA159)).